The following is a 1131-amino-acid chain: Major DNA-binding protein (1131 aa).

A Required for filament formation motif is present at residues 790 to 791 (FW). The required for nuclear localization stretch occupies residues 1112-1131 (LKCEETEHENEEPSLKKARL).

It belongs to the herpesviridae major DNA-binding protein family. In terms of assembly, homooligomers. Forms double-helical filaments necessary for the formation of replication compartments within the host nucleus. Interacts with the origin-binding protein. Interacts with the helicase primase complex; this interaction stimulates primer synthesis activity of the helicase-primase complex. Interacts with the DNA polymerase. Interacts with the alkaline exonuclease; this interaction increases its nuclease processivity.

It is found in the host nucleus. Single-stranded DNA-binding protein required for DNA replication. Its function is as follows. Plays several crucial roles in viral infection. Participates in the opening of the viral DNA origin to initiate replication by interacting with the origin-binding protein. May disrupt loops, hairpins and other secondary structures present on ssDNA to reduce and eliminate pausing of viral DNA polymerase at specific sites during elongation. Promotes viral DNA recombination by performing strand-transfer, characterized by the ability to transfer a DNA strand from a linear duplex to a complementary single-stranded DNA circle. Can also catalyze the renaturation of complementary single strands. Additionally, reorganizes the host cell nucleus, leading to the formation of prereplicative sites and replication compartments. This process is driven by the protein which can form double-helical filaments in the absence of DNA. The protein is Major DNA-binding protein of Human herpesvirus 7 (strain JI) (HHV-7).